The following is a 309-amino-acid chain: Prepilin leader peptidase/N-methyltransferase (309 aa).

Residues 35–55 (MQLAFAIVLGLVVGSFLNVVV) form a helical membrane-spanning segment. The Zn(2+) site is built by cysteine 96, cysteine 99, cysteine 121, and cysteine 124. The next 6 helical transmembrane spans lie at 147 to 167 (LALFGPSGAALAAFGLCAALL), 183 to 203 (LTLPLLWAGLCVNLWGTFASL), 207 to 227 (VIGAIAGYLFLWCILWLFKLL), 230 to 250 (IEGIGYGDLKLLAALGAWLGW), 253 to 273 (LPQVVLIAAVAGAAVGLVATW), and 288 to 308 (FLAAGGAATLFFGTPFYLLLG).

The protein belongs to the peptidase A24 family. Zn(2+) serves as cofactor.

The protein localises to the cell inner membrane. The enzyme catalyses Typically cleaves a -Gly-|-Phe- bond to release an N-terminal, basic peptide of 5-8 residues from type IV prepilin, and then N-methylates the new N-terminal amino group, the methyl donor being S-adenosyl-L-methionine.. Its function is as follows. Plays an essential role in type IV pili and type II pseudopili formation by proteolytically removing the leader sequence from substrate proteins and subsequently monomethylating the alpha-amino group of the newly exposed N-terminal phenylalanine. In Burkholderia pseudomallei (strain 1026b), this protein is Prepilin leader peptidase/N-methyltransferase (gspO).